We begin with the raw amino-acid sequence, 193 residues long: Protein GrpE (193 aa).

Residues 1-40 (MTEENRPQPDQPELTVTSESSVQETGENKARTPEQEGEAM) form a disordered region. Polar residues predominate over residues 14 to 25 (LTVTSESSVQET).

It belongs to the GrpE family. Homodimer.

Its subcellular location is the cytoplasm. Functionally, participates actively in the response to hyperosmotic and heat shock by preventing the aggregation of stress-denatured proteins, in association with DnaK and GrpE. It is the nucleotide exchange factor for DnaK and may function as a thermosensor. Unfolded proteins bind initially to DnaJ; upon interaction with the DnaJ-bound protein, DnaK hydrolyzes its bound ATP, resulting in the formation of a stable complex. GrpE releases ADP from DnaK; ATP binding to DnaK triggers the release of the substrate protein, thus completing the reaction cycle. Several rounds of ATP-dependent interactions between DnaJ, DnaK and GrpE are required for fully efficient folding. This Nitrosospira multiformis (strain ATCC 25196 / NCIMB 11849 / C 71) protein is Protein GrpE.